The primary structure comprises 245 residues: Probable membrane transporter protein YdhB (245 aa).

8 consecutive transmembrane segments (helical) span residues 1–21 (MLIILVMFLLGIILGFIGAGG), 34–56 (HIPIHTALGTSLAGMAFTSLSGA), 71–91 (LIVGGFAAVGSFFGAKLTSFI), 98–118 (YLTAGMLFLSAILILIRLFIL), 137–157 (ILGIAAGVLSGTFGIGSAPFI), 177–197 (MLVIIPLAVGGGIGYITEGFV), 199–219 (YVLLVKVLVGTMCGAYVGAKF), and 225–245 (KVVLKSAIFLTPAIAGLLLLF).

Belongs to the 4-toluene sulfonate uptake permease (TSUP) (TC 2.A.102) family.

The protein localises to the cell membrane. This chain is Probable membrane transporter protein YdhB (ydhB), found in Bacillus subtilis (strain 168).